Consider the following 380-residue polypeptide: Putative 8-amino-7-oxononanoate synthase (380 aa).

R18 serves as a coordination point for substrate. A pyridoxal 5'-phosphate-binding site is contributed by 106–107 (GY). H131 is a binding site for substrate. Pyridoxal 5'-phosphate-binding positions include S179, 205–208 (DEAH), and 236–239 (TFGK). Residue K239 is modified to N6-(pyridoxal phosphate)lysine. T352 lines the substrate pocket.

Belongs to the class-II pyridoxal-phosphate-dependent aminotransferase family. BioF subfamily. Homodimer. Requires pyridoxal 5'-phosphate as cofactor.

The enzyme catalyses 6-carboxyhexanoyl-[ACP] + L-alanine + H(+) = (8S)-8-amino-7-oxononanoate + holo-[ACP] + CO2. It functions in the pathway cofactor biosynthesis; biotin biosynthesis. Its function is as follows. Catalyzes the decarboxylative condensation of pimeloyl-[acyl-carrier protein] and L-alanine to produce 8-amino-7-oxononanoate (AON), [acyl-carrier protein], and carbon dioxide. The chain is Putative 8-amino-7-oxononanoate synthase (bioF) from Neisseria meningitidis serogroup C (strain 053442).